We begin with the raw amino-acid sequence, 330 residues long: MKKTFILQQQEISFVKNTFTQNLIEQLGIIEVQGPILSQVGNGMQDNLSGIEKAVQVNVKCIPNAIFEVVHSLAKWKRHTLARFNFKEDEGLFVHMKALRPDEDSLDPTHSVYVDQWDWEKVIPEGRRNFAYLKETVNSIYRAIRLTELAVEARFDIPSILPKQITFVHSEDLVKRYPDLSSKERENAICKEYGAVFLIGIGGKLSDGKPHDGRAPDYDDWTTESENGYKGLNGDILVWNDQLGKAFELSSMGIRVDESALRLQVGLTGDEDRLKMDWHQDLLNGKLPLTIGGGIGQSRLAMLLLRKKHIGEVQSSVWPKEMLEEFSNIL.

Belongs to the class-II aminoacyl-tRNA synthetase family. AsnA subfamily.

The protein resides in the cytoplasm. The catalysed reaction is L-aspartate + NH4(+) + ATP = L-asparagine + AMP + diphosphate + H(+). Its pathway is amino-acid biosynthesis; L-asparagine biosynthesis; L-asparagine from L-aspartate (ammonia route): step 1/1. This is Aspartate--ammonia ligase from Haemophilus influenzae (strain 86-028NP).